Here is a 385-residue protein sequence, read N- to C-terminus: Probable splicing factor YJU2B (385 aa).

Residues 1-26 (MGERKGQNKYYPPDFNPEKHGSLNRY) are disordered. Position 40 is a phosphoserine (S40). Residues 182–214 (LNSMLRRHFREKKKAMQEEEEKDQALQAKASLA) are a coiled coil. Positions 257 to 385 (PSAQGPSASS…VADYSDSESE (129 aa)) are disordered. Positions 258-271 (SAQGPSASSSKASS) are enriched in low complexity. The residue at position 306 (S306) is a Phosphoserine. The segment covering 359 to 373 (GSSQEDLLNPNTPNA) has biased composition (polar residues).

It belongs to the CWC16 family.

The protein localises to the nucleus. Its function is as follows. May be involved in mRNA splicing. The chain is Probable splicing factor YJU2B (Yju2b) from Mus musculus (Mouse).